Reading from the N-terminus, the 446-residue chain is Glucose-6-phosphate isomerase (446 aa).

The active-site Proton donor is Glu-287. Residues His-308 and Lys-422 contribute to the active site.

The protein belongs to the GPI family.

The protein resides in the cytoplasm. It catalyses the reaction alpha-D-glucose 6-phosphate = beta-D-fructose 6-phosphate. It participates in carbohydrate biosynthesis; gluconeogenesis. Its pathway is carbohydrate degradation; glycolysis; D-glyceraldehyde 3-phosphate and glycerone phosphate from D-glucose: step 2/4. In terms of biological role, catalyzes the reversible isomerization of glucose-6-phosphate to fructose-6-phosphate. This chain is Glucose-6-phosphate isomerase, found in Lactobacillus helveticus (strain DPC 4571).